Here is a 385-residue protein sequence, read N- to C-terminus: MTKSVDTLLIPGPIILSGAVQKALDVPSLGHTSPEFVSIFQRVLKNTRAVFKSAAASKSQPFVLAGSGTLGWDIFASNFILSKAPNKNVLVVSTGTFSDRFADCLRSYGAQVDVVRPLKIGESVPLELITEKLSQNSYGAVTVTHVDTSTAVLSDLKAISQAIKQTSPETFFVVDAVCSIGCEEFEFDEWGVDFALTASQKAIGAPAGLSISLCSSRFMDYALNDSKNGHVHGYFSSLRRWTPIMENYEAGKGAYFATPPVQLINSLDVALKEILEEGLHKRWDLHREMSDWFKDSLVNGLQLTSVSRYPSNMSAHGLTAVYVADPPDVIAFLKSHGVVIAGGIHKDIGPKYIRIGHMGVTACNKNLPYMKNCFDLIKLALQRKK.

Lys-201 carries the post-translational modification N6-(pyridoxal phosphate)lysine. Residue Arg-354 coordinates substrate.

This sequence belongs to the class-V pyridoxal-phosphate-dependent aminotransferase family. Homodimer. Requires pyridoxal 5'-phosphate as cofactor.

It catalyses the reaction glyoxylate + L-alanine = glycine + pyruvate. The protein operates within amino-acid biosynthesis; glycine biosynthesis; glycine from glyoxylate: step 1/1. Has alanine:glyoxylate aminotransferase activity. The chain is Alanine--glyoxylate aminotransferase 1 from Saccharomyces cerevisiae (strain ATCC 204508 / S288c) (Baker's yeast).